Here is a 689-residue protein sequence, read N- to C-terminus: Solute carrier family 22 member 23 (689 aa).

2 disordered regions span residues Met-1–Ala-55 and Thr-162–Asn-188. A glycan (N-linked (GlcNAc...) asparagine) is linked at Asn-24. A compositionally biased stretch (polar residues) spans Trp-165 to Thr-177. The next 2 membrane-spanning stretches (helical) occupy residues Phe-229 to Val-249 and Pro-253 to Val-273. Asn-274 is a glycosylation site (N-linked (GlcNAc...) asparagine). The next 8 helical transmembrane spans lie at Phe-283 to Leu-303, Phe-310 to Leu-330, Val-339 to Pro-359, Thr-466 to Gly-486, Gly-489 to Leu-509, Ile-541 to Phe-561, Cys-572 to Ile-592, and Phe-601 to Leu-621.

This sequence belongs to the major facilitator (TC 2.A.1) superfamily. Organic cation transporter (TC 2.A.1.19) family.

It is found in the membrane. The sequence is that of Solute carrier family 22 member 23 (Slc22a23) from Mus musculus (Mouse).